The following is a 458-amino-acid chain: Acyl-CoA-binding domain-containing protein 5 (458 aa).

Residues His8 to Val97 enclose the ACB domain. Residues Ile19 to Phe28, Tyr39 to Lys43, Lys65, and Tyr84 each bind an acyl-CoA. Disordered stretches follow at residues Lys119–Asp248 and Thr296–Gly369. A compositionally biased stretch (polar residues) spans Gly125 to Asn139. Positions Ala154–Gln188 form a coiled coil. 3 stretches are compositionally biased toward basic and acidic residues: residues His177–Ala195, Glu303–Gln313, and Thr322–Ser338. A compositionally biased stretch (gly residues) spans Gly343–Gly356. A coiled-coil region spans residues Glu373–Ser402. A helical transmembrane segment spans residues Gly430–Leu450.

This sequence belongs to the ATG37 family.

It is found in the peroxisome membrane. Its function is as follows. Acyl-CoA binding protein which acts as the peroxisome receptor for pexophagy but is dispensable for aggrephagy and nonselective autophagy. Binds medium- and long-chain acyl-CoA esters. In Xenopus tropicalis (Western clawed frog), this protein is Acyl-CoA-binding domain-containing protein 5 (acbd5).